The primary structure comprises 773 residues: Cellobiose dehydrogenase (773 aa).

Residues 1–18 (MLGRSLLALLPFVGLAFS) form the signal peptide. Q19 carries the pyrrolidone carboxylic acid modification. The interval 19–208 (QSASQFTDPT…YQNYLNGDSG (190 aa)) is heme domain. M83 and H181 together coordinate heme. A disordered region spans residues 203-227 (LNGDSGNPTTTSTKPTSTSSSVTTG). Low complexity predominate over residues 210-227 (PTTTSTKPTSTSSSVTTG). The segment at 235–773 (YDYIIVGAGP…AKILALAGGP (539 aa)) is oxidoreductase. 236–265 (DYIIVGAGPGGIIAADRLSEAGKKVLLLER) provides a ligand contact to FAD. The active-site Proton acceptor is H707.

It in the C-terminal section; belongs to the GMC oxidoreductase family. FAD is required as a cofactor. Requires heme as cofactor.

Its subcellular location is the secreted. It catalyses the reaction D-cellobiose + A = D-cellobiono-1,5-lactone + AH2. Functionally, degrades both lignin and cellulose. Oxidizes cellobiose to cellobionolactone. The sequence is that of Cellobiose dehydrogenase (CDH-1) from Phanerodontia chrysosporium (White-rot fungus).